A 193-amino-acid chain; its full sequence is General stress protein 16U (193 aa).

This sequence belongs to the CAPAB/TerDEXZ family.

This is General stress protein 16U (yceD) from Bacillus subtilis (strain 168).